Consider the following 678-residue polypeptide: GAS2-like protein 1 (678 aa).

Ala2 bears the N-acetylalanine mark. The 122-residue stretch at 27 to 148 (EAMKEDLADW…CLLEVARRGA (122 aa)) folds into the Calponin-homology (CH) domain. The GAR domain occupies 203–275 (NDLRNLDELV…HYLDKHDPCR (73 aa)). The segment covering 276-291 (CSSSTHRLPQQRTGTF) has biased composition (polar residues). Disordered stretches follow at residues 276 to 524 (CSSS…FRRL) and 538 to 678 (AASH…DSSM). Phosphoserine is present on residues Ser306 and Ser316. Residues 327–340 (GTKEGPETPLRPRD) are compositionally biased toward basic and acidic residues. A Phosphothreonine modification is found at Thr334. 2 positions are modified to phosphoserine: Ser352 and Ser355. The segment covering 354-365 (DSDSSASSAQSG) has biased composition (low complexity). Positions 370-381 (RSDDSATGSRRE) are enriched in basic and acidic residues. The segment covering 392–403 (PASPRRPTAPRS) has biased composition (low complexity). Ser394 is subject to Phosphoserine. A compositionally biased stretch (basic and acidic residues) spans 404-413 (QSRDRLDRGR). Phosphoserine occurs at positions 436 and 438. Basic and acidic residues predominate over residues 437–454 (QSREEQAVLMVRRDRDGQ). The span at 461 to 471 (GRGGGGSGGSG) shows a compositional bias: gly residues. Residues Ser482 and Ser489 each carry the phosphoserine modification. The segment covering 485–495 (APRPSRGPSPG) has biased composition (pro residues). Arg490 is subject to Omega-N-methylarginine. Ser493 carries the phosphoserine modification. Residue Thr501 is modified to Phosphothreonine. The residue at position 507 (Arg507) is an Omega-N-methylarginine. Low complexity-rich tracts occupy residues 509-519 (PLQLDPQQEQQ) and 554-568 (DSAY…SSLS). Residue Arg630 is modified to Omega-N-methylarginine. Residues 631 to 641 (GRMDTQPDRKP) are compositionally biased toward basic and acidic residues. Ser654 bears the Phosphoserine mark. A compositionally biased stretch (polar residues) spans 666–678 (HSVTPRTEPDSSM).

Belongs to the GAS2 family. Interacts with MAPRE1.

It localises to the cytoplasm. The protein resides in the cytoskeleton. The protein localises to the stress fiber. Its function is as follows. Seems to be involved in the cross-linking of microtubules and microfilaments. Regulates microtubule dynamics and stability by interacting with microtubule plus-end tracking proteins, such as MAPRE1, to regulate microtubule growth along actin stress fibers. This chain is GAS2-like protein 1 (Gas2l1), found in Mus musculus (Mouse).